Consider the following 215-residue polypeptide: Large ribosomal subunit protein uL3 (215 aa).

Position 153 is an N5-methylglutamine (Gln-153).

This sequence belongs to the universal ribosomal protein uL3 family. As to quaternary structure, part of the 50S ribosomal subunit. Forms a cluster with proteins L14 and L19. In terms of processing, methylated by PrmB.

Functionally, one of the primary rRNA binding proteins, it binds directly near the 3'-end of the 23S rRNA, where it nucleates assembly of the 50S subunit. The chain is Large ribosomal subunit protein uL3 from Nitrosococcus oceani (strain ATCC 19707 / BCRC 17464 / JCM 30415 / NCIMB 11848 / C-107).